We begin with the raw amino-acid sequence, 80 residues long: Conotoxin SmIVA (80 aa).

The signal sequence occupies residues 1-21 (MGMRMMFTVFLLVVLATTVVS). The propeptide occupies 22–38 (IPSDRASDGRNAAVNER). Q39 is modified (pyrrolidone carboxylic acid). S45 is a glycosylation site (O-linked (HexNAc...) serine). P55, P60, P70, and P72 each carry 4-hydroxyproline. S75 is subject to Serine amide. A propeptide spanning residues 76–80 (GRRND) is cleaved from the precursor.

It belongs to the conotoxin A superfamily. Contains 3 disulfide bonds. In terms of tissue distribution, expressed by the venom duct.

It is found in the secreted. Its function is as follows. Neurotoxin with probable activity on sodium channel. Induces intense repetitive firing of the frog neuromuscular junction, leading to a tetanic contracture in muscle fiber (spastic paralysis). In vivo, shows the same effect as the whole venom when injected on fish prey. This is Conotoxin SmIVA from Conus stercusmuscarum (Fly-specked cone).